The chain runs to 527 residues: Cytochrome P450 monooxygenase aba2 (527 aa).

The chain crosses the membrane as a helical span at residues 26–46; the sequence is TTVAVLVTVALIAQVLWKIFF. N189, N420, and N448 each carry an N-linked (GlcNAc...) asparagine glycan. Residue C460 coordinates heme. N464 carries an N-linked (GlcNAc...) asparagine glycan.

This sequence belongs to the cytochrome P450 family. The cofactor is heme.

Its subcellular location is the membrane. Its pathway is hormone biosynthesis. In terms of biological role, cytochrome P450 monooxygenase; part of the gene cluster that mediates the biosynthesis of abscisic acid (ABA), a phytohormone that acts antagonistically toward salicylic acid (SA), jasmonic acid (JA) and ethylene (ETH) signaling, to impede plant defense responses. The first step of the pathway catalyzes the reaction from farnesyl diphosphate to alpha-ionylideneethane performed by the alpha-ionylideneethane synthase aba3 via a three-step reaction mechanism involving 2 neutral intermediates, beta-farnesene and allofarnesene. The cytochrome P450 monooxygenase aba1 might then be involved in the conversion of alpha-ionylideneethane to alpha-ionylideneacetic acid. Alpha-ionylideneacetic acid is further converted to abscisic acid in 2 steps involving the cytochrome P450 monooxygenase aba2 and the short-chain dehydrogenase/reductase aba4, via the intermediates 1'-deoxy-ABA or 1',4'-trans-diol-ABA, depending on the order of action of these 2 enzymes. Aba2 is responsible for the hydroxylation of carbon atom C-1' and aba4 might be involved in the oxidation of the C-4' carbon atom. This chain is Cytochrome P450 monooxygenase aba2 (aba2), found in Botryotinia fuckeliana (strain B05.10) (Noble rot fungus).